Consider the following 636-residue polypeptide: 1-deoxy-D-xylulose-5-phosphate synthase (636 aa).

Thiamine diphosphate is bound by residues His72 and 113 to 115 (GHA). A Mg(2+)-binding site is contributed by Asp144. Thiamine diphosphate is bound by residues 145–146 (GS), Asn174, Tyr287, and Glu370. Asn174 provides a ligand contact to Mg(2+).

Belongs to the transketolase family. DXPS subfamily. As to quaternary structure, homodimer. Mg(2+) is required as a cofactor. It depends on thiamine diphosphate as a cofactor.

The enzyme catalyses D-glyceraldehyde 3-phosphate + pyruvate + H(+) = 1-deoxy-D-xylulose 5-phosphate + CO2. The protein operates within metabolic intermediate biosynthesis; 1-deoxy-D-xylulose 5-phosphate biosynthesis; 1-deoxy-D-xylulose 5-phosphate from D-glyceraldehyde 3-phosphate and pyruvate: step 1/1. Catalyzes the acyloin condensation reaction between C atoms 2 and 3 of pyruvate and glyceraldehyde 3-phosphate to yield 1-deoxy-D-xylulose-5-phosphate (DXP). The protein is 1-deoxy-D-xylulose-5-phosphate synthase of Synechococcus elongatus (strain ATCC 33912 / PCC 7942 / FACHB-805) (Anacystis nidulans R2).